Consider the following 421-residue polypeptide: Forkhead box protein J1 (421 aa).

2 disordered regions span residues 1-34 (MAESWLRLSGAGPAEEAGPEGGLEEPDALDDSLT) and 48-116 (KAPA…DYAT). Positions 66-80 (PGSAAPGSPLAADPA) are enriched in low complexity. Positions 90 to 99 (KPTSSCTSRS) are enriched in polar residues. Positions 120-210 (VKPPYSYATL…YAERLLSGAF (91 aa)) form a DNA-binding region, fork-head. A disordered region spans residues 261 to 302 (AGWGAGEGRLGHKRKQPLPKRVAKVPRPPSTLLPTPEEQGEL). The segment covering 271–284 (GHKRKQPLPKRVAK) has biased composition (basic residues).

The protein belongs to the FOXJ1 family. As to expression, testis, oviduct, lung and brain cortex.

The protein localises to the nucleus. In terms of biological role, transcription factor specifically required for the formation of motile cilia. Acts by activating transcription of genes that mediate assembly of motile cilia, such as CFAP157. Binds the DNA consensus sequences 5'-HWDTGTTTGTTTA-3' or 5'-KTTTGTTGTTKTW-3' (where H is not G, W is A or T, D is not C, and K is G or T). Activates the transcription of a variety of ciliary proteins in the developing brain and lung. This Homo sapiens (Human) protein is Forkhead box protein J1.